The following is a 132-amino-acid chain: Putative apolipoprotein(a)-like protein 2 (132 aa).

An N-terminal signal peptide occupies residues 1-21 (MEHKEVVLLLLLFLKSAPTET). The Kringle domain maps to 27 to 105 (ECYHSNGQSY…RWEYCNLTRC (79 aa)). 3 cysteine pairs are disulfide-bonded: Cys28/Cys105, Cys49/Cys88, and Cys77/Cys100. N-linked (GlcNAc...) asparagine glycosylation occurs at Asn101.

Expressed in liver but not in other tissues tested.

Its subcellular location is the secreted. In Homo sapiens (Human), this protein is Putative apolipoprotein(a)-like protein 2 (LPAL2).